The primary structure comprises 237 residues: Orotidine 5'-phosphate decarboxylase (237 aa).

Residues D11, K34, 61–70 (DLKLHDIPNT), T124, R186, Q195, G215, and R216 each bind substrate. The active-site Proton donor is the K63.

It belongs to the OMP decarboxylase family. Type 1 subfamily. In terms of assembly, homodimer.

The enzyme catalyses orotidine 5'-phosphate + H(+) = UMP + CO2. It participates in pyrimidine metabolism; UMP biosynthesis via de novo pathway; UMP from orotate: step 2/2. Its function is as follows. Catalyzes the decarboxylation of orotidine 5'-monophosphate (OMP) to uridine 5'-monophosphate (UMP). The sequence is that of Orotidine 5'-phosphate decarboxylase from Lactococcus lactis subsp. cremoris (strain SK11).